The chain runs to 180 residues: MASYLAEEYKEKVAPALAEKFDYKSSMQIPKIDKIVLNMGVGDAVSNAKNLDEAVEELTLISGQKPLITKAKKSIANFRLREGMSIGAKVTLRGDRMYDFLYKLINVSLPRVRDFRGVSTRSFDGRGNYTLGVKEQLIFLEIDFDKVNRTRGLDIVIVTTANTDEEARELLTQFGMPFAR.

The protein belongs to the universal ribosomal protein uL5 family. In terms of assembly, part of the 50S ribosomal subunit; part of the 5S rRNA/L5/L18/L25 subcomplex. Contacts the 5S rRNA and the P site tRNA. Forms a bridge to the 30S subunit in the 70S ribosome.

In terms of biological role, this is one of the proteins that bind and probably mediate the attachment of the 5S RNA into the large ribosomal subunit, where it forms part of the central protuberance. In the 70S ribosome it contacts protein S13 of the 30S subunit (bridge B1b), connecting the 2 subunits; this bridge is implicated in subunit movement. Contacts the P site tRNA; the 5S rRNA and some of its associated proteins might help stabilize positioning of ribosome-bound tRNAs. The polypeptide is Large ribosomal subunit protein uL5 (Lactobacillus helveticus (strain DPC 4571)).